We begin with the raw amino-acid sequence, 250 residues long: DNA repair protein RecO (250 aa).

Belongs to the RecO family.

Involved in DNA repair and RecF pathway recombination. This chain is DNA repair protein RecO, found in Syntrophobacter fumaroxidans (strain DSM 10017 / MPOB).